A 662-amino-acid polypeptide reads, in one-letter code: 72 kDa type IV collagenase (662 aa).

An N-terminal signal peptide occupies residues 1-29; sequence MEALGARGALAGFLRALCVLGCLLGRATA. Positions 30-109 are cleaved as a propeptide — activation peptide; the sequence is PPSPVIKFPG…PRCGNPDVAN (80 aa). A Cysteine switch motif is present at residues 100–107; sequence PRCGNPDV. Cysteine 102 contacts Zn(2+). Residues 110-221 are collagenase-like 1; it reads YNFFPRKPKW…LWTLGEGQVV (112 aa). Residues aspartate 134 and aspartate 168 each contribute to the Ca(2+) site. Residues histidine 178 and aspartate 180 each contribute to the Zn(2+) site. Positions 185 and 186 each coordinate Ca(2+). Histidine 193 lines the Zn(2+) pocket. Glycine 200, glycine 202, and aspartate 204 together coordinate Ca(2+). Histidine 206 contributes to the Zn(2+) binding site. Aspartate 208, aspartate 209, and glutamate 211 together coordinate Ca(2+). The tract at residues 222–396 is collagen-binding; sequence RVKYGNADGE…WGFCPDQGYS (175 aa). 3 Fibronectin type-II domains span residues 228 to 276, 286 to 334, and 344 to 392; these read ADGE…FCPH, ADGQ…FCPE, and SEGA…FCPD. 6 disulfides stabilise this stretch: cysteine 233–cysteine 259, cysteine 247–cysteine 274, cysteine 291–cysteine 317, cysteine 305–cysteine 332, cysteine 349–cysteine 375, and cysteine 363–cysteine 390. Residues 397-467 form a collagenase-like 2 region; it reads LFLVAAHEFG…GPTPTLGPVT (71 aa). Histidine 403 is a Zn(2+) binding site. The active site involves glutamate 404. Residues histidine 407 and histidine 413 each contribute to the Zn(2+) site. The interval 414 to 662 is required for inhibitor TIMP2 binding; it reads SQDPGALMAP…GSIKTDWLGC (249 aa). Cysteine 471 and cysteine 662 are joined by a disulfide. 4 Hemopexin repeats span residues 474–518, 519–565, 567–615, and 616–662; these read DIVF…WPEL, PEKI…GLPP, VQRV…WNAI, and PDHL…WLGC. Aspartate 478, aspartate 523, and aspartate 571 together coordinate Ca(2+). Residue asparagine 575 is glycosylated (N-linked (GlcNAc...) asparagine). Aspartate 620 contacts Ca(2+). Asparagine 644 carries an N-linked (GlcNAc...) asparagine glycan.

The protein belongs to the peptidase M10A family. As to quaternary structure, interacts (via the C-terminal hemopexin-like domains-containing region) with the integrin alpha-V/beta-3; the interaction promotes vascular invasion in angiogenic vessels and melamoma cells. Interacts (via the C-terminal PEX domain) with TIMP2 (via the C-terminal); the interaction inhibits the degradation activity. Interacts with GSK3B. It depends on Ca(2+) as a cofactor. The cofactor is Zn(2+). In terms of processing, phosphorylation on multiple sites modulates enzymatic activity. Phosphorylated by PKC in vitro. Post-translationally, the propeptide is processed by MMP14 (MT-MMP1) and MMP16 (MT-MMP3). Autocatalytic cleavage in the C-terminal produces the anti-angiogenic peptide, PEX. This processing appears to be facilitated by binding integrinv/beta3.

It is found in the secreted. The protein resides in the extracellular space. Its subcellular location is the extracellular matrix. The protein localises to the membrane. It localises to the nucleus. The enzyme catalyses Cleavage of gelatin type I and collagen types IV, V, VII, X. Cleaves the collagen-like sequence Pro-Gln-Gly-|-Ile-Ala-Gly-Gln.. In terms of biological role, ubiquitinous metalloproteinase that is involved in diverse functions such as remodeling of the vasculature, angiogenesis, tissue repair, tumor invasion, inflammation, and atherosclerotic plaque rupture. As well as degrading extracellular matrix proteins, can also act on several nonmatrix proteins such as big endothelial 1 and beta-type CGRP promoting vasoconstriction. Also cleaves KISS at a Gly-|-Leu bond. Appears to have a role in myocardial cell death pathways. Contributes to myocardial oxidative stress by regulating the activity of GSK3beta. Cleaves GSK3beta in vitro. Involved in the formation of the fibrovascular tissues. PEX, the C-terminal non-catalytic fragment of MMP2, possesses anti-angiogenic and anti-tumor properties and inhibits cell migration and cell adhesion to FGF2 and vitronectin. Ligand for integrin alpha-v/beta-3 on the surface of blood vessels. The protein is 72 kDa type IV collagenase (MMP2) of Oryctolagus cuniculus (Rabbit).